Reading from the N-terminus, the 115-residue chain is Large ribosomal subunit protein eL30 (115 aa).

Residues Ser10 and Ser16 each carry the phosphoserine modification. Lys26 is modified (N6-acetyllysine; alternate). Lys26 is covalently cross-linked (Glycyl lysine isopeptide (Lys-Gly) (interchain with G-Cter in SUMO2); alternate).

The protein belongs to the eukaryotic ribosomal protein eL30 family. In terms of assembly, component of the large ribosomal subunit.

It is found in the cytoplasm. Its function is as follows. Component of the large ribosomal subunit. The ribosome is a large ribonucleoprotein complex responsible for the synthesis of proteins in the cell. This is Large ribosomal subunit protein eL30 (RPL30) from Oryctolagus cuniculus (Rabbit).